Consider the following 155-residue polypeptide: Nuclear cap-binding protein subunit 2 (155 aa).

MRNA contacts are provided by residues Tyr-19, Tyr-42, 111-115, 122-126, and 132-133; these read RTDWD, RQYGR, and QV. The 79-residue stretch at 39-117 folds into the RRM domain; the sequence is NTLYVGNLSF…RIIRTDWDAG (79 aa). Residues 122-155 form a disordered region; it reads RQYGRGKSGGQVRDEYRQDYDPARGGYGKVVARP. Positions 133–143 are enriched in basic and acidic residues; it reads VRDEYRQDYDP.

It belongs to the RRM NCBP2 family. As to quaternary structure, component of the nuclear cap-binding complex (CBC), a heterodimer composed of ncbp1/cbp80 and ncbp2/cbp20 that interacts with m7GpppG-capped RNA.

Its subcellular location is the nucleus. It localises to the cytoplasm. Its function is as follows. Component of the cap-binding complex (CBC), which binds co-transcriptionally to the 5' cap of pre-mRNAs and is involved in various processes such as pre-mRNA splicing, translation regulation, nonsense-mediated mRNA decay, RNA-mediated gene silencing (RNAi) by microRNAs (miRNAs) and mRNA export. The CBC complex is involved in mRNA export from the nucleus, leading to the recruitment of the mRNA export machinery to the 5' end of mRNA and to mRNA export in a 5' to 3' direction through the nuclear pore. The CBC complex is also involved in mediating U snRNA and intronless mRNAs export from the nucleus. The CBC complex is essential for a pioneer round of mRNA translation, before steady state translation when the CBC complex is replaced by cytoplasmic cap-binding protein eIF4E. The pioneer round of mRNA translation mediated by the CBC complex plays a central role in nonsense-mediated mRNA decay (NMD), NMD only taking place in mRNAs bound to the CBC complex, but not on eIF4E-bound mRNAs. The CBC complex enhances NMD in mRNAs containing at least one exon-junction complex (EJC), promoting the interaction between upf1 and upf2. The CBC complex is also involved in 'failsafe' NMD, which is independent of the EJC complex, while it does not participate in Staufen-mediated mRNA decay (SMD). During cell proliferation, the CBC complex is also involved in microRNAs (miRNAs) biogenesis via its interaction with srrt/ars2, thereby being required for miRNA-mediated RNA interference. The CBC complex also acts as a negative regulator of parn, thereby acting as an inhibitor of mRNA deadenylation. In the CBC complex, ncbp2/cbp20 recognizes and binds capped RNAs (m7GpppG-capped RNA) but requires ncbp1/cbp80 to stabilize the movement of its N-terminal loop and lock the CBC into a high affinity cap-binding state with the cap structure. The conventional cap-binding complex with NCBP2 binds both small nuclear RNA (snRNA) and messenger (mRNA) and is involved in their export from the nucleus. The sequence is that of Nuclear cap-binding protein subunit 2 (ncbp2) from Esox lucius (Northern pike).